The primary structure comprises 269 residues: Indole-3-glycerol phosphate synthase (269 aa).

The protein belongs to the TrpC family.

The catalysed reaction is 1-(2-carboxyphenylamino)-1-deoxy-D-ribulose 5-phosphate + H(+) = (1S,2R)-1-C-(indol-3-yl)glycerol 3-phosphate + CO2 + H2O. It functions in the pathway amino-acid biosynthesis; L-tryptophan biosynthesis; L-tryptophan from chorismate: step 4/5. The polypeptide is Indole-3-glycerol phosphate synthase (Rhodococcus jostii (strain RHA1)).